The following is a 298-amino-acid chain: Junctional adhesion molecule B (298 aa).

Positions 1–28 (MARSPQGLLMLLLLHYLIVALDYHKANG) are cleaved as a signal peptide. The Extracellular portion of the chain corresponds to 29–236 (FSASKDHRQE…GKRMQVDVLN (208 aa)). The 97-residue stretch at 32 to 128 (SKDHRQEVTV…GQNLQEDKVM (97 aa)) folds into the Ig-like V-type domain. 2 disulfide bridges follow: Cys-51–Cys-110 and Cys-156–Cys-214. Asn-99 carries an N-linked (GlcNAc...) asparagine glycan. Residues 135-238 (PAVPACEVPT…RMQVDVLNIS (104 aa)) enclose the Ig-like C2-type domain. The helical transmembrane segment at 237–257 (ISGIIATVVVVAFVISVCGLG) threads the bilayer. Residues 258-298 (TCYAQRKGYFSKETSFQKGSPASKVTTMSENDFKHTKSFII) are Cytoplasmic-facing.

This sequence belongs to the immunoglobulin superfamily. In terms of processing, the expression in Sertoli cells is regulated by TGFB3 through ubiquitin-mediated proteasomal degradation. As to expression, expressed by bone marrow stromal cells (at protein level). Expressed in skin (at protein level). Expressed in testis by Sertoli cells (at protein level). Expressed by dorsal root ganglion and spinal cord neurons.

The protein resides in the cell membrane. The protein localises to the cell junction. It is found in the tight junction. In terms of biological role, junctional adhesion protein that mediates heterotypic cell-cell interactions with its cognate receptor JAM3 to regulate different cellular processes. Plays a role in homing and mobilization of hematopoietic stem and progenitor cells within the bone marrow. At the surface of bone marrow stromal cells, it contributes to the retention of the hematopoietic stem and progenitor cells expressing JAM3. Plays a central role in leukocytes extravasation by facilitating not only transmigration but also tethering and rolling of leukocytes along the endothelium. Tethering and rolling of leukocytes are dependent on the binding by JAM2 of the integrin alpha-4/beta-1. Plays a role in spermatogenesis where JAM2 and JAM3, which are respectively expressed by Sertoli and germ cells, mediate an interaction between both cell types and play an essential role in the anchorage of germ cells onto Sertoli cells and the assembly of cell polarity complexes during spermatid differentiation. Also functions as an inhibitory somatodendritic cue that prevents the myelination of non-axonal parts of neurons. During myogenesis, it is involved in myocyte fusion. May also play a role in angiogenesis. This chain is Junctional adhesion molecule B, found in Mus musculus (Mouse).